A 198-amino-acid chain; its full sequence is Mitrocomin (198 aa).

A propeptide spanning residues 1-8 is cleaved from the precursor; that stretch reads MSMGSRYA. 3 EF-hand domains span residues 19-54, 118-147, and 148-183; these read KWIARHKHMFNFLDINSNGQINLNEMVHKASNIICK, DALFDIIDKDRNGSVSLDEWIQYTHCAGIQ, and QSRGQCEATFAHCDLDGDGKLDVDEMTRQHLGFWYS. Residues aspartate 32, asparagine 34, asparagine 36, glutamine 38, glutamate 43, aspartate 125, aspartate 127, asparagine 129, serine 131, glutamate 136, aspartate 161, aspartate 163, aspartate 165, lysine 167, and glutamate 172 each coordinate Ca(2+).

It belongs to the aequorin family.

Ca(2+)-dependent bioluminescence photoprotein. Displays an emission peak at 470 nm (blue light). Trace amounts of calcium ion trigger the intramolecular oxidation of the chromophore, coelenterazine into coelenteramide and CO(2) with the concomitant emission of light. The polypeptide is Mitrocomin (MI17) (Mitrocoma cellularia (Cross jellyfish)).